Consider the following 1394-residue polypeptide: Kinesin-like protein KIF27 (1394 aa).

Positions 5 to 341 constitute a Kinesin motor domain; sequence PIKVAVRIRP…LKYANRARNI (337 aa). 84 to 91 is a binding site for ATP; sequence GQTGSGKT. 2 coiled-coil regions span residues 352–418 and 493–554; these read QADR…IEQA and QVVF…ELAK. Disordered regions lie at residues 551 to 583 and 642 to 664; these read ELAK…PHTA and FSDN…SRSH. Over residues 555–565 the composition is skewed to polar residues; the sequence is RSSSMPTSTKE. Positions 571 to 580 are enriched in basic and acidic residues; that stretch reads PDARAPEKRP. A phosphoserine mark is found at S643, S646, S672, S675, and S704. The stretch at 709–980 forms a coiled coil; the sequence is LQKLRTSELI…NKKLRSSQAL (272 aa). S999 bears the Phosphoserine mark. Coiled coils occupy residues 1010-1078, 1118-1152, and 1187-1226; these read TEEK…SIQN, NKVI…HELE, and QDGE…RLKD. Basic and acidic residues predominate over residues 1267–1280; sequence TENTKLNGREKEVD. Residues 1267–1340 form a disordered region; sequence TENTKLNGRE…SQSPPPPQLQ (74 aa). 2 stretches are compositionally biased toward polar residues: residues 1281–1295 and 1310–1320; these read NSSS…TQQI and APSSGQLQSSA. S1365 and S1387 each carry phosphoserine. The segment at 1375-1394 is disordered; sequence SLGAGVRSVTADSLEEPEES.

The protein belongs to the TRAFAC class myosin-kinesin ATPase superfamily. Kinesin family. KIF27 subfamily. Interacts with STK36.

The protein localises to the cytoplasm. It is found in the cytoskeleton. The protein resides in the cell projection. Its subcellular location is the cilium. Plays an essential role in motile ciliogenesis. This Rattus norvegicus (Rat) protein is Kinesin-like protein KIF27 (Kif27).